The sequence spans 70 residues: Large ribosomal subunit protein bL31 (70 aa).

The Zn(2+) site is built by cysteine 16, cysteine 18, cysteine 38, and cysteine 41.

Belongs to the bacterial ribosomal protein bL31 family. Type A subfamily. Part of the 50S ribosomal subunit. It depends on Zn(2+) as a cofactor.

Binds the 23S rRNA. The polypeptide is Large ribosomal subunit protein bL31 (Mycolicibacterium gilvum (strain PYR-GCK) (Mycobacterium gilvum (strain PYR-GCK))).